Consider the following 213-residue polypeptide: Ribonuclease HII (213 aa).

In terms of domain architecture, RNase H type-2 spans 18-213 (GLHAGVDEVG…RPVKERLAKR (196 aa)). Positions 24, 25, and 116 each coordinate a divalent metal cation.

This sequence belongs to the RNase HII family. Requires Mn(2+) as cofactor. It depends on Mg(2+) as a cofactor.

Its subcellular location is the cytoplasm. The catalysed reaction is Endonucleolytic cleavage to 5'-phosphomonoester.. Functionally, endonuclease that specifically degrades the RNA of RNA-DNA hybrids. The polypeptide is Ribonuclease HII (Shewanella woodyi (strain ATCC 51908 / MS32)).